The chain runs to 31 residues: Cytochrome b6-f complex subunit 6 (31 aa).

A helical transmembrane segment spans residues Ile-4–Ser-26.

It belongs to the PetL family. The 4 large subunits of the cytochrome b6-f complex are cytochrome b6, subunit IV (17 kDa polypeptide, PetD), cytochrome f and the Rieske protein, while the 4 small subunits are PetG, PetL, PetM and PetN. The complex functions as a dimer.

It is found in the plastid. The protein localises to the chloroplast thylakoid membrane. In terms of biological role, component of the cytochrome b6-f complex, which mediates electron transfer between photosystem II (PSII) and photosystem I (PSI), cyclic electron flow around PSI, and state transitions. PetL is important for photoautotrophic growth as well as for electron transfer efficiency and stability of the cytochrome b6-f complex. The chain is Cytochrome b6-f complex subunit 6 from Lactuca sativa (Garden lettuce).